Consider the following 184-residue polypeptide: ADP-ribosylation factor-like protein 2 (184 aa).

Glycine 2 carries N-myristoyl glycine lipidation. GTP contacts are provided by residues 23–30 (GLDNAGKT), 66–70 (DVGGQ), glycine 68, and 125–128 (NKSD).

It belongs to the small GTPase superfamily. Arf family.

The protein resides in the cytoplasm. It is found in the cell membrane. It localises to the cytoskeleton. Its subcellular location is the microtubule organizing center. The protein localises to the centrosome. GTP-binding protein that functions in embryogenesis, cytokinesis, germline development and microtubulule cytoskeleton dynamics. This chain is ADP-ribosylation factor-like protein 2 (evl-20.1), found in Caenorhabditis briggsae.